We begin with the raw amino-acid sequence, 1054 residues long: Bifunctional cytochrome P450/NADPH--P450 reductase 2 (1054 aa).

The interval 1-475 (MKQASAIPQP…QADIKAETKP (475 aa)) is cytochrome P450. Cys403 contributes to the heme binding site. Residues 462-480 (QRKEQADIKAETKPKETKP) are compositionally biased toward basic and acidic residues. Residues 462–482 (QRKEQADIKAETKPKETKPKH) form a disordered region. The segment at 476 to 1053 (KETKPKHGTP…RRYVKDVWTG (578 aa)) is NADPH--P450 reductase. Positions 486–625 (LLVLFGSNLG…HRESWENRFW (140 aa)) constitute a Flavodoxin-like domain. Residues 492–497 (SNLGTA), 539–542 (SYNG), 573–575 (CGN), and 581–583 (TYQ) contribute to the FMN site. The FAD-binding FR-type domain maps to 663-896 (YGAFEGIVLE…RTPQSGFQMP (234 aa)).

This sequence in the N-terminal section; belongs to the cytochrome P450 family. It depends on FAD as a cofactor. The cofactor is FMN. Heme b serves as cofactor.

The protein resides in the cytoplasm. The enzyme catalyses an organic molecule + reduced [NADPH--hemoprotein reductase] + O2 = an alcohol + oxidized [NADPH--hemoprotein reductase] + H2O + H(+). It carries out the reaction 2 oxidized [cytochrome P450] + NADPH = 2 reduced [cytochrome P450] + NADP(+) + H(+). Functionally, functions as a fatty acid monooxygenase. Catalyzes hydroxylation of a range of medium to long-chain fatty acids, with a preference for long-chain unsaturated and branched-chain fatty acids over saturated fatty acids. Hydroxylation of myristic acid occurs mainly at the omega-2 and omega-3 positions, in approximately equal proportions. Also displays a NADPH-dependent reductase activity in the C-terminal domain, which allows electron transfer from NADPH to the heme iron of the cytochrome P450 N-terminal domain. This chain is Bifunctional cytochrome P450/NADPH--P450 reductase 2, found in Bacillus subtilis (strain 168).